We begin with the raw amino-acid sequence, 522 residues long: Glucans biosynthesis protein G (522 aa).

Residues 1–33 (MPNNKFFVKSSKASLRWLGATVLLTLYALPSWA) form the signal peptide.

This sequence belongs to the OpgD/OpgG family.

The protein resides in the periplasm. It functions in the pathway glycan metabolism; osmoregulated periplasmic glucan (OPG) biosynthesis. Involved in the biosynthesis of osmoregulated periplasmic glucans (OPGs). This is Glucans biosynthesis protein G from Sodalis glossinidius (strain morsitans).